The chain runs to 194 residues: Glycerol-3-phosphate acyltransferase (194 aa).

5 consecutive transmembrane segments (helical) span residues 2–22 (LIEI…TGLL), 51–71 (SVGI…VLAA), 80–100 (WIAL…FLGF), 112–132 (VFLG…VAVV), and 155–175 (FLSG…LVIW).

It belongs to the PlsY family. In terms of assembly, probably interacts with PlsX.

The protein resides in the cell inner membrane. It carries out the reaction an acyl phosphate + sn-glycerol 3-phosphate = a 1-acyl-sn-glycero-3-phosphate + phosphate. The protein operates within lipid metabolism; phospholipid metabolism. Functionally, catalyzes the transfer of an acyl group from acyl-phosphate (acyl-PO(4)) to glycerol-3-phosphate (G3P) to form lysophosphatidic acid (LPA). This enzyme utilizes acyl-phosphate as fatty acyl donor, but not acyl-CoA or acyl-ACP. This is Glycerol-3-phosphate acyltransferase from Geobacter metallireducens (strain ATCC 53774 / DSM 7210 / GS-15).